The following is a 168-amino-acid chain: 2-oxo-4-hydroxy-4-carboxy-5-ureidoimidazoline decarboxylase (168 aa).

The active-site Proton donor; for OHCU decarboxylase activity is the histidine 70. Over residues 70-79 (HPDLGERTEM) the composition is skewed to basic and acidic residues. The interval 70 to 93 (HPDLGERTEMTDASEAEQASAELD) is disordered. Substrate-binding positions include proline 71, 83–87 (SEAEQ), and 118–122 (FVMAV).

The protein belongs to the OHCU decarboxylase family.

The catalysed reaction is 5-hydroxy-2-oxo-4-ureido-2,5-dihydro-1H-imidazole-5-carboxylate + H(+) = (S)-allantoin + CO2. It functions in the pathway purine metabolism; urate degradation; (S)-allantoin from urate: step 3/3. In terms of biological role, catalyzes the stereoselective decarboxylation of 2-oxo-4-hydroxy-4-carboxy-5-ureidoimidazoline (OHCU) to (S)-allantoin. This is 2-oxo-4-hydroxy-4-carboxy-5-ureidoimidazoline decarboxylase from Haloferax volcanii (strain ATCC 29605 / DSM 3757 / JCM 8879 / NBRC 14742 / NCIMB 2012 / VKM B-1768 / DS2) (Halobacterium volcanii).